The chain runs to 402 residues: CCA-adding enzyme (402 aa).

2 residues coordinate ATP: Gly32 and Arg35. CTP contacts are provided by Gly32 and Arg35. Residues Asp45 and Asp47 each coordinate Mg(2+). 5 residues coordinate ATP: Arg116, Asp159, Arg162, Arg165, and Arg168. Positions 116, 159, 162, 165, and 168 each coordinate CTP.

It belongs to the tRNA nucleotidyltransferase/poly(A) polymerase family. Bacterial CCA-adding enzyme type 3 subfamily. Homodimer. It depends on Mg(2+) as a cofactor.

It carries out the reaction a tRNA precursor + 2 CTP + ATP = a tRNA with a 3' CCA end + 3 diphosphate. The catalysed reaction is a tRNA with a 3' CCA end + 2 CTP + ATP = a tRNA with a 3' CCACCA end + 3 diphosphate. Catalyzes the addition and repair of the essential 3'-terminal CCA sequence in tRNAs without using a nucleic acid template. Adds these three nucleotides in the order of C, C, and A to the tRNA nucleotide-73, using CTP and ATP as substrates and producing inorganic pyrophosphate. tRNA 3'-terminal CCA addition is required both for tRNA processing and repair. Also involved in tRNA surveillance by mediating tandem CCA addition to generate a CCACCA at the 3' terminus of unstable tRNAs. While stable tRNAs receive only 3'-terminal CCA, unstable tRNAs are marked with CCACCA and rapidly degraded. This Streptococcus pyogenes serotype M2 (strain MGAS10270) protein is CCA-adding enzyme.